The chain runs to 115 residues: uncharacterized protein (115 aa).

This is an uncharacterized protein from Rickettsia prowazekii (strain Madrid E).